We begin with the raw amino-acid sequence, 31 residues long: Cytochrome b6-f complex subunit 6 (31 aa).

The chain crosses the membrane as a helical span at residues 4–24 (IISYFGFLFGALTLALILFIG).

It belongs to the PetL family. The 4 large subunits of the cytochrome b6-f complex are cytochrome b6, subunit IV (17 kDa polypeptide, PetD), cytochrome f and the Rieske protein, while the 4 small subunits are PetG, PetL, PetM and PetN. The complex functions as a dimer.

The protein localises to the plastid. The protein resides in the chloroplast thylakoid membrane. Its function is as follows. Component of the cytochrome b6-f complex, which mediates electron transfer between photosystem II (PSII) and photosystem I (PSI), cyclic electron flow around PSI, and state transitions. PetL is important for photoautotrophic growth as well as for electron transfer efficiency and stability of the cytochrome b6-f complex. The chain is Cytochrome b6-f complex subunit 6 from Physcomitrium patens (Spreading-leaved earth moss).